A 649-amino-acid chain; its full sequence is WEB family protein At5g55860 (649 aa).

Coiled-coil stretches lie at residues 59–227, 267–356, and 391–461; these read EKVL…ACSQ, EFAK…IESV, and TINQ…MSEK. Basic and acidic residues predominate over residues 443–453; it reads EAKAAETKALE. The tract at residues 443-483 is disordered; sequence EAKAAETKALEQIKSMSEKTNAARNSTSSESGSQSITLSQE. Over residues 456-467 the composition is skewed to polar residues; the sequence is KSMSEKTNAARN. Low complexity predominate over residues 468-482; the sequence is STSSESGSQSITLSQ. Residues 505–549 are a coiled coil; it reads AALAQVEAVRASENETLKKLETTQEEIKKLKTATEEALKKAAMAD. Positions 583–611 are disordered; it reads MKMASESSPQQHYKAPKQKPVNNKLEKTK.

Belongs to the WEB family.

This is WEB family protein At5g55860 from Arabidopsis thaliana (Mouse-ear cress).